The primary structure comprises 163 residues: Disulfide bond formation protein B 1 (163 aa).

The Cytoplasmic portion of the chain corresponds to Met1 to Leu9. The helical transmembrane segment at Phe10 to Tyr26 threads the bilayer. At Leu27–Ile44 the chain is on the periplasmic side. A disulfide bond links Cys36 and Cys39. Residues Phe45–Pro61 form a helical membrane-spanning segment. Residues Gly62–Arg67 lie on the Cytoplasmic side of the membrane. Residues Ile68–Ala85 form a helical membrane-spanning segment. The Periplasmic segment spans residues Arg86 to Glu142. Cysteines 101 and 128 form a disulfide. A helical transmembrane segment spans residues Trp143–Arg161. Residues Arg162–Ala163 lie on the Cytoplasmic side of the membrane.

Belongs to the DsbB family.

The protein localises to the cell inner membrane. In terms of biological role, required for disulfide bond formation in some periplasmic proteins. Acts by oxidizing the DsbA protein. The protein is Disulfide bond formation protein B 1 (dsbB1) of Pseudomonas aeruginosa (strain ATCC 15692 / DSM 22644 / CIP 104116 / JCM 14847 / LMG 12228 / 1C / PRS 101 / PAO1).